The primary structure comprises 257 residues: Protein YIPF5 (257 aa).

Over 1–124 the chain is Cytoplasmic; that stretch reads MSGFENLNTD…KVADGSIMNE (124 aa). Positions 75–106 are interaction with Sec23; the sequence is PASPQPFYGNSFEDEPPLLEELGINFDHIWQK. The helical transmembrane segment at 125–145 threads the bilayer; it reads TDLAGPMVFCLAFGATLLLAG. Residue Lys146 is a topological domain, lumenal. A helical transmembrane segment spans residues 147 to 167; it reads IQFGYVYGISAIGCLGMFCLL. Topologically, residues 168–173 are cytoplasmic; that stretch reads NLMSMT. Residues 174–194 traverse the membrane as a helical segment; it reads GVSFGCVASVLGYCLLPMILL. The Lumenal segment spans residues 195–196; sequence SS. The chain crosses the membrane as a helical span at residues 197 to 217; sequence FAVIFSLQGMVGIILTAGIIG. The Cytoplasmic portion of the chain corresponds to 218–236; sequence WCSFSASKIFISALAMEGQ. Residues 237–257 form a helical membrane-spanning segment; that stretch reads QLLVAYPCALLYGVFALISVF.

The protein belongs to the YIP1 family. In terms of assembly, interacts with the COPII coat components Sec23 (SEC23A and/or SEC23B) and Sec24 (SEC24A and/or SEC24B). Interacts with YIF1A. May interact with RAB1A. Interacts with YIPF3 and YIPF4.

The protein resides in the endoplasmic reticulum membrane. Its subcellular location is the golgi apparatus. It is found in the cis-Golgi network membrane. The protein localises to the cytoplasmic vesicle. It localises to the COPII-coated vesicle. In terms of biological role, plays a role in transport between endoplasmic reticulum and Golgi. In pancreatic beta cells, required to transport proinsulin from endoplasmic reticulum into the Golgi. In Macaca fascicularis (Crab-eating macaque), this protein is Protein YIPF5 (YIPF5).